Here is a 214-residue protein sequence, read N- to C-terminus: ATP-dependent dethiobiotin synthetase BioD (214 aa).

10-15 (GIGKTY) serves as a coordination point for ATP. Thr14 contacts Mg(2+). The active site involves Lys35. Thr39 contributes to the substrate binding site. Residues Asp44, 109-112 (EGAG), and 169-170 (NC) each bind ATP. The Mg(2+) site is built by Asp44 and Glu109.

Belongs to the dethiobiotin synthetase family. As to quaternary structure, homodimer. The cofactor is Mg(2+).

The protein localises to the cytoplasm. The enzyme catalyses (7R,8S)-7,8-diammoniononanoate + CO2 + ATP = (4R,5S)-dethiobiotin + ADP + phosphate + 3 H(+). It functions in the pathway cofactor biosynthesis; biotin biosynthesis; biotin from 7,8-diaminononanoate: step 1/2. Catalyzes a mechanistically unusual reaction, the ATP-dependent insertion of CO2 between the N7 and N8 nitrogen atoms of 7,8-diaminopelargonic acid (DAPA, also called 7,8-diammoniononanoate) to form a ureido ring. The polypeptide is ATP-dependent dethiobiotin synthetase BioD (Methanocaldococcus jannaschii (strain ATCC 43067 / DSM 2661 / JAL-1 / JCM 10045 / NBRC 100440) (Methanococcus jannaschii)).